A 669-amino-acid chain; its full sequence is Small ribosomal subunit protein mS39 (669 aa).

The transit peptide at 1-13 (MAAPCVRLGSVRC) directs the protein to the mitochondrion. PPR repeat units follow at residues 129–163 (IEGV…GTAP), 164–199 (SLET…DDQD), 209–239 (RPGQ…MPER), 240–274 (NAHS…RLTA), 275–314 (DVQT…NVRP), 315–351 (NLLT…NIEP), 352–392 (SLGT…FTLR), 396–430 (DVYF…DNRG), 438–472 (QSTY…LYYP), 473–507 (NSRG…GHSN), and 556–590 (SSAS…HRVP). The interval 186 to 218 (DIQTSEQNQQDDQDQQETEDSKKRPGQYRKASE) is disordered. A compositionally biased stretch (acidic residues) spans 194–203 (QQDDQDQQET). The segment at 648–669 (EDLQKSHSSSSSSSESSDSDRE) is disordered. Low complexity predominate over residues 653-663 (SHSSSSSSSES).

It belongs to the mitochondrion-specific ribosomal protein mS39 family.

It is found in the mitochondrion. In terms of biological role, mitochondrial protein that may have a role in mitochondrial translation. This chain is Small ribosomal subunit protein mS39 (ptcd3), found in Xenopus laevis (African clawed frog).